We begin with the raw amino-acid sequence, 215 residues long: Cytochrome b6 (215 aa).

A helical membrane pass occupies residues 32–52 (VFYCFGGMTLTCFLVQLATGF). Position 35 (cysteine 35) interacts with heme c. Heme b contacts are provided by histidine 86 and histidine 100. 3 helical membrane-spanning segments follow: residues 90 to 110 (ASMMVLMMILHIFRVYLTGGF), 116 to 136 (LTWITGVILAVLTVSFGVTGY), and 186 to 206 (LHTLFLPALSVIFLLAHFLMI). The heme b site is built by histidine 187 and histidine 202.

Belongs to the cytochrome b family. PetB subfamily. The 4 large subunits of the cytochrome b6-f complex are cytochrome b6, subunit IV (17 kDa polypeptide, PetD), cytochrome f and the Rieske protein, while the 4 small subunits are PetG, PetL, PetM and PetN. The complex functions as a dimer. It depends on heme b as a cofactor. Requires heme c as cofactor.

The protein localises to the plastid. Its subcellular location is the chloroplast thylakoid membrane. Functionally, component of the cytochrome b6-f complex, which mediates electron transfer between photosystem II (PSII) and photosystem I (PSI), cyclic electron flow around PSI, and state transitions. The protein is Cytochrome b6 of Cyanidium caldarium (Red alga).